Here is a 589-residue protein sequence, read N- to C-terminus: Proline--tRNA ligase (589 aa).

The protein belongs to the class-II aminoacyl-tRNA synthetase family. ProS type 1 subfamily. As to quaternary structure, homodimer.

It localises to the cytoplasm. It catalyses the reaction tRNA(Pro) + L-proline + ATP = L-prolyl-tRNA(Pro) + AMP + diphosphate. Catalyzes the attachment of proline to tRNA(Pro) in a two-step reaction: proline is first activated by ATP to form Pro-AMP and then transferred to the acceptor end of tRNA(Pro). As ProRS can inadvertently accommodate and process non-cognate amino acids such as alanine and cysteine, to avoid such errors it has two additional distinct editing activities against alanine. One activity is designated as 'pretransfer' editing and involves the tRNA(Pro)-independent hydrolysis of activated Ala-AMP. The other activity is designated 'posttransfer' editing and involves deacylation of mischarged Ala-tRNA(Pro). The misacylated Cys-tRNA(Pro) is not edited by ProRS. This is Proline--tRNA ligase from Gloeobacter violaceus (strain ATCC 29082 / PCC 7421).